A 447-amino-acid polypeptide reads, in one-letter code: NADH-ubiquinone oxidoreductase chain 4 (447 aa).

13 helical membrane passes run L4–F24, L34–I54, M67–L87, L100–F120, M149–I169, L189–W209, M223–I243, F248–L268, I279–L299, I304–V324, M349–S371, L388–I408, and G422–L442.

Belongs to the complex I subunit 4 family.

The protein localises to the mitochondrion membrane. It catalyses the reaction a ubiquinone + NADH + 5 H(+)(in) = a ubiquinol + NAD(+) + 4 H(+)(out). Functionally, core subunit of the mitochondrial membrane respiratory chain NADH dehydrogenase (Complex I) that is believed to belong to the minimal assembly required for catalysis. Complex I functions in the transfer of electrons from NADH to the respiratory chain. The immediate electron acceptor for the enzyme is believed to be ubiquinone. This chain is NADH-ubiquinone oxidoreductase chain 4 (ND4), found in Apis mellifera ligustica (Common honeybee).